The chain runs to 275 residues: NH(3)-dependent NAD(+) synthetase (275 aa).

50–57 lines the ATP pocket; the sequence is GISGGVDS. A Mg(2+)-binding site is contributed by aspartate 56. Arginine 147 serves as a coordination point for deamido-NAD(+). Residue threonine 167 coordinates ATP. Glutamate 172 is a Mg(2+) binding site. Deamido-NAD(+) is bound by residues lysine 180 and aspartate 187. Residues lysine 196 and threonine 218 each contribute to the ATP site. Residue 267-268 coordinates deamido-NAD(+); that stretch reads HK.

This sequence belongs to the NAD synthetase family. As to quaternary structure, homodimer.

It catalyses the reaction deamido-NAD(+) + NH4(+) + ATP = AMP + diphosphate + NAD(+) + H(+). Its pathway is cofactor biosynthesis; NAD(+) biosynthesis; NAD(+) from deamido-NAD(+) (ammonia route): step 1/1. In terms of biological role, catalyzes the ATP-dependent amidation of deamido-NAD to form NAD. Uses ammonia as a nitrogen source. In Pseudomonas syringae pv. tomato (strain ATCC BAA-871 / DC3000), this protein is NH(3)-dependent NAD(+) synthetase.